Here is a 202-residue protein sequence, read N- to C-terminus: LexA repressor (202 aa).

Active-site for autocatalytic cleavage activity residues include Ser123 and Lys159.

Belongs to the peptidase S24 family. Homodimer.

The enzyme catalyses Hydrolysis of Ala-|-Gly bond in repressor LexA.. Its function is as follows. Binds the consensus sequence 5'-TGTTC-N(4)-GAACA-3'; some genes have a tandem consensus sequence, at high concentrations their binding is cooperative. Binds to the promoters of a number of genes, including dinB, imuA, lexA, recA, recQ, splB and uvrA. Represses a number of genes involved in the response to DNA damage (SOS response). In the presence of single-stranded DNA, RecA interacts with LexA causing an autocatalytic cleavage which disrupts the DNA-binding part of LexA, leading to derepression of the SOS regulon and eventually DNA repair. The sequence is that of LexA repressor from Verrucomicrobium spinosum (strain ATCC 43997 / DSM 4136 / JCM 18804 / IFAM 1439).